The primary structure comprises 328 residues: Malate dehydrogenase (328 aa).

12–18 is a binding site for NAD(+); it reads GAAGQIG. Positions 95 and 101 each coordinate substrate. NAD(+) is bound by residues N108, Q115, and 132–134; that span reads VGN. Substrate contacts are provided by N134 and R165. H190 (proton acceptor) is an active-site residue.

This sequence belongs to the LDH/MDH superfamily. MDH type 2 family.

The catalysed reaction is (S)-malate + NAD(+) = oxaloacetate + NADH + H(+). In terms of biological role, catalyzes the reversible oxidation of malate to oxaloacetate. This chain is Malate dehydrogenase, found in Polaromonas sp. (strain JS666 / ATCC BAA-500).